Here is a 449-residue protein sequence, read N- to C-terminus: UNC93-like protein MFSD11 (449 aa).

The chain crosses the membrane as a helical span at residues 8–28 (LFNIIILGVAFMFMFTAFQTC). An N-linked (GlcNAc...) asparagine glycan is attached at asparagine 40. 5 helical membrane-spanning segments follow: residues 53-73 (AIIY…VAIV), 74-94 (GPQL…AVFI), 96-116 (PFPW…AVLW), 138-158 (IFWA…YFAW), and 170-190 (RTVF…FFLI). Phosphoserine is present on serine 204. A run of 6 helical transmembrane segments spans residues 239–259 (MLLL…FSGV), 277–297 (LIGL…SLFG), 309–329 (PVVL…FLNM), 359–379 (FLLG…LGFL), 385–405 (APAF…AFFY), and 410–430 (LLHW…ISFF).

This sequence belongs to the unc-93 family.

It localises to the membrane. The polypeptide is UNC93-like protein MFSD11 (MFSD11) (Macaca fascicularis (Crab-eating macaque)).